Consider the following 502-residue polypeptide: Cardiolipin synthase (502 aa).

The next 3 membrane-spanning stretches (helical) occupy residues 7–27 (VAIL…YWGG), 29–49 (LLGI…FVIS), and 59–79 (IAWL…YLLF). PLD phosphodiesterase domains follow at residues 237-264 (INFR…GDEY) and 415-442 (EKGF…DMRS). Active-site residues include histidine 242, lysine 244, aspartate 249, histidine 420, lysine 422, and aspartate 427.

The protein belongs to the phospholipase D family. Cardiolipin synthase subfamily.

It is found in the cell membrane. The catalysed reaction is 2 a 1,2-diacyl-sn-glycero-3-phospho-(1'-sn-glycerol) = a cardiolipin + glycerol. In terms of biological role, catalyzes the reversible phosphatidyl group transfer from one phosphatidylglycerol molecule to another to form cardiolipin (CL) (diphosphatidylglycerol) and glycerol. This Geobacillus thermodenitrificans (strain NG80-2) protein is Cardiolipin synthase (cls).